The primary structure comprises 211 residues: MRLRKKWWARPEMEASPLCIVNPKDYKGKWREEFKNDNEIYLELGCGRGDFVTNIANKHPEKNYVAIDLKDEVIAIALRKITESEVQNVRIAPLQIAFINEVFDKDEIARIYINFCNPWPKDRHKKRRLTHTKFLTKYKEFLKPNSQIWFKTDDDGLFVESLDYFKECGFQIKFMTYDLHKSGFDKNIVTEYESKFLKLGINIKFLIAELK.

S-adenosyl-L-methionine is bound by residues E43, D68, and N117. Substrate is bound by residues K121, D153, and 190 to 193 (TEYE).

This sequence belongs to the class I-like SAM-binding methyltransferase superfamily. TrmB family.

It catalyses the reaction guanosine(46) in tRNA + S-adenosyl-L-methionine = N(7)-methylguanosine(46) in tRNA + S-adenosyl-L-homocysteine. It functions in the pathway tRNA modification; N(7)-methylguanine-tRNA biosynthesis. Catalyzes the formation of N(7)-methylguanine at position 46 (m7G46) in tRNA. In Clostridium acetobutylicum (strain ATCC 824 / DSM 792 / JCM 1419 / IAM 19013 / LMG 5710 / NBRC 13948 / NRRL B-527 / VKM B-1787 / 2291 / W), this protein is tRNA (guanine-N(7)-)-methyltransferase.